The primary structure comprises 299 residues: Taste receptor type 2 member 5 (299 aa).

Residue Met1 is a topological domain, extracellular. Residues 2–22 (LSAGLGLLMLVAVIEFLIGLI) traverse the membrane as a helical segment. The Cytoplasmic portion of the chain corresponds to 23–45 (GNGILVVWSLREWIRKFSWSSYN). Residues 46–66 (LIILGLAGCRFLLQWLIILDL) form a helical membrane-spanning segment. The Extracellular portion of the chain corresponds to 67–82 (SLFPLFQSSSWLRYLN). The chain crosses the membrane as a helical span at residues 83-103 (VFWVLVSQASLWFATFLSVFY). The Cytoplasmic segment spans residues 104-127 (CKKITTFDRPAYLWLKQRAYNLSL). The helical transmembrane segment at 128-148 (WCLLGYFIISLLLTVQVGLTV) threads the bilayer. Over 149 to 175 (HHPPQGNSSIRYPFEHWQYLYVFQLNS) the chain is Extracellular. An N-linked (GlcNAc...) asparagine glycan is attached at Asn155. Residues 176–196 (GSYLPLMVFLVSSGMLIISLY) traverse the membrane as a helical segment. Over 197–223 (THHKKMKVHSAGRRDARAKAHITALKS) the chain is Cytoplasmic. Residues 224-244 (LGCFLLLHLVYIVASPFSITS) form a helical membrane-spanning segment. Over 245-253 (KTYPPDLTS) the chain is Extracellular. A helical transmembrane segment spans residues 254–274 (VFIWETLMAAYPSLHSLMLIM). The Cytoplasmic portion of the chain corresponds to 275–299 (GIPRVKQTCQKILWKTVCARRCWGP).

The protein belongs to the G-protein coupled receptor T2R family.

It localises to the membrane. Its function is as follows. Receptor that may play a role in the perception of bitterness and is gustducin-linked. May play a role in sensing the chemical composition of the gastrointestinal content. The activity of this receptor may stimulate alpha gustducin, mediate PLC-beta-2 activation and lead to the gating of TRPM5. The polypeptide is Taste receptor type 2 member 5 (TAS2R5) (Papio hamadryas (Hamadryas baboon)).